The following is a 1054-amino-acid chain: Reverse gyrase (1054 aa).

The RG N-terminal-type zinc finger occupies 1–43 (MIPVVYSNLCPVCGGDLESKEIEKHVCFRKKRSLCLFPEDFLL). Residues C10, C13, C27, and C35 each contribute to the Zn(2+) site. The cysteines at positions 35 and 650 are disulfide-linked. ATP-binding residues include Q61, K84, T85, and S86. Residues 65 to 245 (AKRILRKESF…FRQLLNFDIG (181 aa)) form the Helicase ATP-binding domain. The DEAD box motif lies at 182–185 (DDVD). A latch region region spans residues 352-427 (PSFRVTIEDI…EGEVIFPDLR (76 aa)). The tract at residues 502 to 1054 (DLIKPALFIV…DLYAEIKSID (553 aa)) is topoisomerase I. A Toprim domain is found at 506-662 (PALFIVESPT…VKRAEFHEVT (157 aa)). E512 lines the Mg(2+) pocket. Residues 581–609 (IKRCRDCGYQFTEDRESCPKCGSENVDNS) form an RG C-terminal-type zinc finger. Zn(2+)-binding residues include C584, C587, C598, and C601. D631 provides a ligand contact to Mg(2+). Residues 677–1054 (DENLVKAQVV…DLYAEIKSID (378 aa)) form the Topo IA-type catalytic domain. Residue Y809 is the O-(5'-phospho-DNA)-tyrosine intermediate of the active site.

The protein in the N-terminal section; belongs to the DEAD box helicase family. DDVD subfamily. It in the C-terminal section; belongs to the type IA topoisomerase family. Monomer. Zn(2+) serves as cofactor. The cofactor is Mg(2+).

It is found in the cytoplasm. The enzyme catalyses ATP + H2O = ADP + phosphate + H(+). Modifies the topological state of DNA by introducing positive supercoils in an ATP-dependent process, increasing the linking number in steps of +1. Very efficient supercoiling occurs on relaxed DNA with a single-stranded bubble; the minimal bubble is 20 nucleotides (nt) and up to 10 positive supercoils can be introduced into a 3.1 kb plasmid with a 50 nt bubble. Positively supercoils DNA with all (d)NTPS, although it requires about 10-fold more of non-(d)ATP. In the absence of ATP (or at low levels of enzyme), or in the presence of ADP, relaxes negative supercoils. Only relaxes positive supercoils when the substrate contains a bubble. Also promotes strand annealing of complementary ssDNA circles. Binds to single-stranded DNA, transiently cleaves and then rejoins the ends, introducing a positive supercoil in the process. The scissile phosphodiester is attacked by the catalytic tyrosine of the enzyme, resulting in the formation of a DNA-(5'-phosphotyrosyl)-enzyme intermediate. Probably involved in rewinding DNA strands in regions of the chromosome that have opened up to allow replication, transcription, DNA repair and/or for DNA protection. In terms of biological role, in vitro protects DNA against degradation at 90 degrees Celsius, reducing dsDNA breakage about 8-fold; ATP hydrolysis is not necessary, while ADP decreases the protection somewhat. Coats all forms of dsDNA; the DNA is protected against cleavage and transcription. Recognizes nicked DNA and forms a coat at the nicking site, which may help hold DNA in a structure amenable to repair. The protein is Reverse gyrase of Archaeoglobus fulgidus (strain ATCC 49558 / DSM 4304 / JCM 9628 / NBRC 100126 / VC-16).